The primary structure comprises 122 residues: Large ribosomal subunit protein uL14 (122 aa).

It belongs to the universal ribosomal protein uL14 family. As to quaternary structure, part of the 50S ribosomal subunit. Forms a cluster with proteins L3 and L19. In the 70S ribosome, L14 and L19 interact and together make contacts with the 16S rRNA in bridges B5 and B8.

Functionally, binds to 23S rRNA. Forms part of two intersubunit bridges in the 70S ribosome. The polypeptide is Large ribosomal subunit protein uL14 (Nautilia profundicola (strain ATCC BAA-1463 / DSM 18972 / AmH)).